The chain runs to 199 residues: NAD(P)H dehydrogenase (quinone) (199 aa).

Residues 4–190 (VLVLYYSTYG…DGARFLGQHV (187 aa)) enclose the Flavodoxin-like domain. FMN contacts are provided by residues 10-15 (STYGHI) and 78-80 (TRF). Tyr12 provides a ligand contact to NAD(+). Position 98 (Trp98) interacts with substrate. Residues 113 to 119 (STATQHG) and His134 contribute to the FMN site.

Belongs to the WrbA family. The cofactor is FMN.

The catalysed reaction is a quinone + NADH + H(+) = a quinol + NAD(+). It carries out the reaction a quinone + NADPH + H(+) = a quinol + NADP(+). The polypeptide is NAD(P)H dehydrogenase (quinone) (Gluconacetobacter diazotrophicus (strain ATCC 49037 / DSM 5601 / CCUG 37298 / CIP 103539 / LMG 7603 / PAl5)).